The chain runs to 386 residues: Queuine tRNA-ribosyltransferase (386 aa).

Aspartate 99 acts as the Proton acceptor in catalysis. Substrate contacts are provided by residues 99–103, aspartate 153, glutamine 198, and glycine 225; that span reads DSGGF. The interval 256–262 is RNA binding; sequence GVGKPED. Residue aspartate 275 is the Nucleophile of the active site. The interval 280–284 is RNA binding; important for wobble base 34 recognition; sequence TRNAR. Positions 313, 315, 318, and 344 each coordinate Zn(2+).

The protein belongs to the queuine tRNA-ribosyltransferase family. Homodimer. Within each dimer, one monomer is responsible for RNA recognition and catalysis, while the other monomer binds to the replacement base PreQ1. Zn(2+) serves as cofactor.

It catalyses the reaction 7-aminomethyl-7-carbaguanine + guanosine(34) in tRNA = 7-aminomethyl-7-carbaguanosine(34) in tRNA + guanine. The protein operates within tRNA modification; tRNA-queuosine biosynthesis. Catalyzes the base-exchange of a guanine (G) residue with the queuine precursor 7-aminomethyl-7-deazaguanine (PreQ1) at position 34 (anticodon wobble position) in tRNAs with GU(N) anticodons (tRNA-Asp, -Asn, -His and -Tyr). Catalysis occurs through a double-displacement mechanism. The nucleophile active site attacks the C1' of nucleotide 34 to detach the guanine base from the RNA, forming a covalent enzyme-RNA intermediate. The proton acceptor active site deprotonates the incoming PreQ1, allowing a nucleophilic attack on the C1' of the ribose to form the product. After dissociation, two additional enzymatic reactions on the tRNA convert PreQ1 to queuine (Q), resulting in the hypermodified nucleoside queuosine (7-(((4,5-cis-dihydroxy-2-cyclopenten-1-yl)amino)methyl)-7-deazaguanosine). The protein is Queuine tRNA-ribosyltransferase of Acinetobacter baylyi (strain ATCC 33305 / BD413 / ADP1).